The following is a 430-amino-acid chain: Long-chain specific acyl-CoA dehydrogenase, mitochondrial (430 aa).

The N-terminal 30 residues, 1-30, are a transit peptide targeting the mitochondrion; that stretch reads MATRLLRGSLRLWGGLCAPRLPTASRCSHS. Lysine 42 bears the N6-acetyllysine mark. Serine 54 and serine 55 each carry phosphoserine. Residues lysine 66 and lysine 81 each carry the N6-acetyllysine; alternate modification. Lysine 66 and lysine 81 each carry N6-succinyllysine; alternate. 2 positions are modified to N6-acetyllysine: lysine 92 and lysine 95. At lysine 165 the chain carries N6-succinyllysine. FAD-binding positions include 170-179 and 203-205; these read IAMTEPGAGS and FIT. Serine 179 is a substrate binding site. Residue 227–228 participates in substrate binding; it reads AH. Lysine 240 is subject to N6-succinyllysine. N6-acetyllysine; alternate is present on residues lysine 254 and lysine 279. N6-succinyllysine; alternate is present on residues lysine 254 and lysine 279. Residues tyrosine 282 and 289–292 contribute to the substrate site; that span reads PQER. The Proton acceptor role is filled by glutamate 291. An FAD-binding site is contributed by arginine 317. Lysine 318 carries the N6-acetyllysine modification. Lysine 322 carries the post-translational modification N6-acetyllysine; alternate. Lysine 322 bears the N6-succinyllysine; alternate mark. Glutamine 328 is an FAD binding site. Lysine 358 carries the post-translational modification N6-acetyllysine. Phosphoserine is present on serine 362. 385-389 serves as a coordination point for FAD; the sequence is QLHGG. 412–413 contributes to the substrate binding site; sequence GG. Position 414-416 (414-416) interacts with FAD; that stretch reads TNE.

The protein belongs to the acyl-CoA dehydrogenase family. As to quaternary structure, homotetramer. FAD serves as cofactor. In terms of processing, acetylation at Lys-318 and Lys-322 in proximity of the cofactor-binding sites strongly reduces catalytic activity. These sites are deacetylated by SIRT3.

It is found in the mitochondrion matrix. The catalysed reaction is a long-chain 2,3-saturated fatty acyl-CoA + oxidized [electron-transfer flavoprotein] + H(+) = a long-chain (2E)-enoyl-CoA + reduced [electron-transfer flavoprotein]. It catalyses the reaction hexanoyl-CoA + oxidized [electron-transfer flavoprotein] + H(+) = (2E)-hexenoyl-CoA + reduced [electron-transfer flavoprotein]. It carries out the reaction octanoyl-CoA + oxidized [electron-transfer flavoprotein] + H(+) = (2E)-octenoyl-CoA + reduced [electron-transfer flavoprotein]. The enzyme catalyses decanoyl-CoA + oxidized [electron-transfer flavoprotein] + H(+) = (2E)-decenoyl-CoA + reduced [electron-transfer flavoprotein]. The catalysed reaction is dodecanoyl-CoA + oxidized [electron-transfer flavoprotein] + H(+) = (2E)-dodecenoyl-CoA + reduced [electron-transfer flavoprotein]. It catalyses the reaction tetradecanoyl-CoA + oxidized [electron-transfer flavoprotein] + H(+) = (2E)-tetradecenoyl-CoA + reduced [electron-transfer flavoprotein]. It carries out the reaction oxidized [electron-transfer flavoprotein] + hexadecanoyl-CoA + H(+) = (2E)-hexadecenoyl-CoA + reduced [electron-transfer flavoprotein]. The enzyme catalyses octadecanoyl-CoA + oxidized [electron-transfer flavoprotein] + H(+) = (2E)-octadecenoyl-CoA + reduced [electron-transfer flavoprotein]. The catalysed reaction is eicosanoyl-CoA + oxidized [electron-transfer flavoprotein] + H(+) = (2E)-eicosenoyl-CoA + reduced [electron-transfer flavoprotein]. It catalyses the reaction docosanoyl-CoA + oxidized [electron-transfer flavoprotein] + H(+) = (2E)-docosenoyl-CoA + reduced [electron-transfer flavoprotein]. It carries out the reaction tetracosanoyl-CoA + oxidized [electron-transfer flavoprotein] + H(+) = (2E)-tetracosenoyl-CoA + reduced [electron-transfer flavoprotein]. The enzyme catalyses (5E)-tetradecenoyl-CoA + oxidized [electron-transfer flavoprotein] + H(+) = (2E,5E)-tetradecadienoyl-CoA + reduced [electron-transfer flavoprotein]. The catalysed reaction is (5Z)-tetradecenoyl-CoA + oxidized [electron-transfer flavoprotein] + H(+) = (2E,5Z)-tetradecadienoyl-CoA + reduced [electron-transfer flavoprotein]. It catalyses the reaction oxidized [electron-transfer flavoprotein] + (9Z)-octadecenoyl-CoA + H(+) = (2E,9Z)-octadecadienoyl-CoA + reduced [electron-transfer flavoprotein]. It participates in lipid metabolism; mitochondrial fatty acid beta-oxidation. Functionally, long-chain specific acyl-CoA dehydrogenase is one of the acyl-CoA dehydrogenases that catalyze the first step of mitochondrial fatty acid beta-oxidation, an aerobic process breaking down fatty acids into acetyl-CoA and allowing the production of energy from fats. The first step of fatty acid beta-oxidation consists in the removal of one hydrogen from C-2 and C-3 of the straight-chain fatty acyl-CoA thioester, resulting in the formation of trans-2-enoyl-CoA. Among the different mitochondrial acyl-CoA dehydrogenases, long-chain specific acyl-CoA dehydrogenase can act on saturated and unsaturated acyl-CoAs with 6 to 24 carbons with a preference for 8 to 18 carbons long primary chains. This Sus scrofa (Pig) protein is Long-chain specific acyl-CoA dehydrogenase, mitochondrial.